The sequence spans 274 residues: MSSLIKEIEEAWQIKDKLFQDSSKLITLKKTLNDIIESLNQGTIRVCEKKENSWEVNEWVKKAILLYFITTESQLYNNNYNSWYDKVAPKFSADTDKNIFKEAAIRKVPGAVVRTGTYIAKNVVIMPSFINIGAYIDEGTMIDTWATIGSCAQIGKNCHISGGTGIGGVLEPLQAKPVIIEDNCFIGARSEIAEGVIVEEGAVISMGVFIGSSTKIIYRDTGEIIYGRIPAYSVVVPGVLPAKEAGKPGLYCVVIIKQVDKATRAKVSINDLLR.

Arg-106 and Asp-143 together coordinate substrate.

The protein belongs to the transferase hexapeptide repeat family. Homotrimer.

Its subcellular location is the cytoplasm. The catalysed reaction is (S)-2,3,4,5-tetrahydrodipicolinate + succinyl-CoA + H2O = (S)-2-succinylamino-6-oxoheptanedioate + CoA. The protein operates within amino-acid biosynthesis; L-lysine biosynthesis via DAP pathway; LL-2,6-diaminopimelate from (S)-tetrahydrodipicolinate (succinylase route): step 1/3. The sequence is that of 2,3,4,5-tetrahydropyridine-2,6-dicarboxylate N-succinyltransferase from Rickettsia felis (strain ATCC VR-1525 / URRWXCal2) (Rickettsia azadi).